We begin with the raw amino-acid sequence, 299 residues long: Oxygen-dependent coproporphyrinogen-III oxidase (299 aa).

Residue serine 92 coordinates substrate. Residues histidine 96 and histidine 106 each contribute to the Mn(2+) site. Histidine 106 (proton donor) is an active-site residue. Residue 108 to 110 (NVR) participates in substrate binding. Mn(2+) contacts are provided by histidine 145 and histidine 175. The interval 240–275 (YVEFNLVWDRGTLFGLQTGGRTESILMSMPPLVRWE) is important for dimerization. 258 to 260 (GGR) serves as a coordination point for substrate.

Belongs to the aerobic coproporphyrinogen-III oxidase family. Homodimer. Requires Mn(2+) as cofactor.

The protein resides in the cytoplasm. The enzyme catalyses coproporphyrinogen III + O2 + 2 H(+) = protoporphyrinogen IX + 2 CO2 + 2 H2O. It participates in porphyrin-containing compound metabolism; protoporphyrin-IX biosynthesis; protoporphyrinogen-IX from coproporphyrinogen-III (O2 route): step 1/1. In terms of biological role, involved in the heme biosynthesis. Catalyzes the aerobic oxidative decarboxylation of propionate groups of rings A and B of coproporphyrinogen-III to yield the vinyl groups in protoporphyrinogen-IX. This is Oxygen-dependent coproporphyrinogen-III oxidase from Escherichia coli O17:K52:H18 (strain UMN026 / ExPEC).